The sequence spans 117 residues: Large ribosomal subunit protein bL20 (117 aa).

The protein belongs to the bacterial ribosomal protein bL20 family.

In terms of biological role, binds directly to 23S ribosomal RNA and is necessary for the in vitro assembly process of the 50S ribosomal subunit. It is not involved in the protein synthesizing functions of that subunit. The chain is Large ribosomal subunit protein bL20 from Limosilactobacillus reuteri (strain DSM 20016) (Lactobacillus reuteri).